The chain runs to 205 residues: MPGLLGKKIGMTSVFSAEGKNLPCTVIEVGPCVVTQIKTLEKDGYEAVQLGFQEKKEKHTTQPEMGHFKKAGVAPQRHLAEFKNFETEYKLGDVITVDFLEDAGFVDVVGTSKGKGFQGVVKRHGFGGVGQTTHGQHNRARKPGSIGACSYPAKVFKGMRMGGQMGNERVTVQNLQVIKVMPEHNLLLVKGSVPGAKGSILLIEK.

The protein belongs to the universal ribosomal protein uL3 family. Part of the 50S ribosomal subunit. Forms a cluster with proteins L14 and L19.

Its function is as follows. One of the primary rRNA binding proteins, it binds directly near the 3'-end of the 23S rRNA, where it nucleates assembly of the 50S subunit. The sequence is that of Large ribosomal subunit protein uL3 from Parabacteroides distasonis (strain ATCC 8503 / DSM 20701 / CIP 104284 / JCM 5825 / NCTC 11152).